The primary structure comprises 170 residues: Small ribosomal subunit protein bS16 (170 aa).

The interval 114-170 (EGGPTTEAAKPKKKAATSGAKKAAKAAEPEAAAPEAAEPEAAAPAEGGEQAESSTES) is disordered. Low complexity predominate over residues 142–170 (PEAAAPEAAEPEAAAPAEGGEQAESSTES).

It belongs to the bacterial ribosomal protein bS16 family.

The chain is Small ribosomal subunit protein bS16 from Mycobacterium avium (strain 104).